Here is a 182-residue protein sequence, read N- to C-terminus: Proline-rich protein, Y-linked (182 aa).

Disordered regions lie at residues 1 to 22 and 89 to 108; these read MMRR…KPRD and VPAD…PPPG. Over residues 91–108 the composition is skewed to pro residues; the sequence is ADPPPASPYRTSPRPPPG. The 14-residue stretch at 154 to 167 folds into the DUF1725 domain; sequence WMKLETIILSKLSQ.

The chain is Proline-rich protein, Y-linked (PRORY) from Homo sapiens (Human).